Consider the following 81-residue polypeptide: MRKDIHPKNNLVVFKDGSNGAMFLTKSTLNSKETIKYIDGKEYPLITVEITSKSHPFYTGQQKFVDAAGRIDKFNKRYKKS.

This sequence belongs to the bacterial ribosomal protein bL31 family. Type B subfamily. In terms of assembly, part of the 50S ribosomal subunit.

This chain is Large ribosomal subunit protein bL31B, found in Borreliella burgdorferi (strain ZS7) (Borrelia burgdorferi).